The primary structure comprises 557 residues: Formate--tetrahydrofolate ligase 2 (557 aa).

ATP is bound at residue 66-73; that stretch reads TPAGEGKT.

Belongs to the formate--tetrahydrofolate ligase family.

The enzyme catalyses (6S)-5,6,7,8-tetrahydrofolate + formate + ATP = (6R)-10-formyltetrahydrofolate + ADP + phosphate. It functions in the pathway one-carbon metabolism; tetrahydrofolate interconversion. This chain is Formate--tetrahydrofolate ligase 2, found in Streptococcus pyogenes serotype M18 (strain MGAS8232).